Consider the following 393-residue polypeptide: Branched-chain-amino-acid aminotransferase, mitochondrial (393 aa).

The N-terminal 27 residues, 1–27 (MATAALRQIWIPRFLPVPWFLCGSRRY), are a transit peptide targeting the mitochondrion. Position 169 (Y169) interacts with substrate. N6-(pyridoxal phosphate)lysine is present on K230. At K322 the chain carries N6-acetyllysine.

The protein belongs to the class-IV pyridoxal-phosphate-dependent aminotransferase family. Homodimer. Pyridoxal 5'-phosphate is required as a cofactor.

It localises to the mitochondrion. It catalyses the reaction L-leucine + 2-oxoglutarate = 4-methyl-2-oxopentanoate + L-glutamate. It carries out the reaction L-isoleucine + 2-oxoglutarate = (S)-3-methyl-2-oxopentanoate + L-glutamate. The enzyme catalyses L-valine + 2-oxoglutarate = 3-methyl-2-oxobutanoate + L-glutamate. In terms of biological role, catalyzes the first reaction in the catabolism of the essential branched chain amino acids leucine, isoleucine, and valine. May also function as a transporter of branched chain alpha-keto acids. This chain is Branched-chain-amino-acid aminotransferase, mitochondrial (BCAT2), found in Bos taurus (Bovine).